The primary structure comprises 678 residues: Chloride channel protein ClC-Kb (678 aa).

Residues 1 to 50 are Cytoplasmic-facing; it reads MEELVGLREGSSGNPVALRELWSPCPRLRRGIRGGLEWLKQKLFRVGEDW. Helical transmembrane passes span 51 to 82 and 91 to 111; these read YFLM…KWLY and LRYL…SGFS. Residues 116 to 127 constitute an intramembrane region (helical); the sequence is PFSGGSGIPELK. A chloride-binding site is contributed by Ser-121. The next 2 helical transmembrane spans lie at 141–160 and 161–180; these read IKNF…TGST and LFLG…AAYL. The segment at residues 203–224 is an intramembrane region (helical); the sequence is AGAAVGVATVFAAPFSGVLFCI. The chain crosses the membrane as a helical span at residues 236 to 255; that stretch reads YWRGFFAATCGAFMFRLLAV. Ca(2+) contacts are provided by Glu-259, Glu-261, Asp-278, and Glu-281. 2 helical membrane passes run 282 to 310 and 325 to 342; these read IFFF…LAFT and PLYA…TYPP. Positions 349-360 form an intramembrane region, helical; it reads ASRLSMREHLDT. Asn-364 carries an N-linked (GlcNAc...) asparagine glycan. Transmembrane regions (helical) follow at residues 400 to 420 and 421 to 440; these read GTLA…TTIP and MPAG…GRLL. Phe-426 provides a ligand contact to chloride. The segment at residues 464 to 496 is an intramembrane region (helical); sequence GGYALAGAAAFSGAVTHSISTALLAFELTGQIV. Residues 500-520 form a helical membrane-spanning segment; the sequence is PVLMAVLAANAIAQSCQPSFY. Over 521–678 the chain is Cytoplasmic; that stretch reads DGTIMVKKLP…SWVERQHTGF (158 aa). CBS domains follow at residues 551–612 and 620–678; these read MRRA…ARAS and DILA…HTGF.

It belongs to the chloride channel (TC 2.A.49) family. CLCNKB subfamily. As to quaternary structure, homodimer. Interacts with BSND. N-glycosylated. Expressed predominantly in the kidney.

Its subcellular location is the basolateral cell membrane. It carries out the reaction chloride(in) = chloride(out). It catalyses the reaction iodide(out) = iodide(in). The catalysed reaction is nitrate(in) = nitrate(out). The enzyme catalyses bromide(in) = bromide(out). In terms of biological role, anion-selective channel permeable to small monovalent anions with ion selectivity for chloride &gt; bromide &gt; nitrate &gt; iodide. Forms a homodimeric channel where each subunit has its own ion conduction pathway. May conduct double-barreled currents controlled by two types of gates, two fast gates that control each subunit independently and a slow common gate that opens and shuts off both subunits simultaneously. Assembles with the regulatory subunit BSND/Barttin for sorting at the basolateral plasma membrane domain and functional switch to the ion conducting state. CLCNKB:BSND channels display mostly a linear current-voltage relationship controlled by common gate. Mediates chloride conductance along nephron segments, namely the thick ascending limb of Henle's loop, convoluted tubule and the collecting duct, contributing to the maintenance of systemic acid-base and electrolyte homeostasis. Conducts chloride currents in the stria vascularis of the inner ear to establish the endocochlear potential necessary for normal hearing. This Oryctolagus cuniculus (Rabbit) protein is Chloride channel protein ClC-Kb (CLCNKB).